Reading from the N-terminus, the 150-residue chain is UPF0208 membrane protein VS_0999 (150 aa).

2 helical membrane-spanning segments follow: residues 42–62 and 70–90; these read FGVK…MVFN and AVVM…WLGN.

The protein belongs to the UPF0208 family.

The protein localises to the cell inner membrane. The chain is UPF0208 membrane protein VS_0999 from Vibrio atlanticus (strain LGP32) (Vibrio splendidus (strain Mel32)).